The sequence spans 737 residues: Lysyl oxidase homolog 2A (737 aa).

The N-terminal stretch at 1–18 (MAVSSALCIFSLLVLAQA) is a signal peptide. SRCR domains are found at residues 29–130 (LRLA…VICN), 159–270 (IRPI…VSCV), 294–393 (VRLR…VRCN), and 403–512 (IRLS…VSCS). Cystine bridges form between C55-C119, C68-C129, C99-C109, C188-C259, C201-C269, C235-C245, C319-C382, C332-C392, and C363-C373. N-linked (GlcNAc...) asparagine glycosylation occurs at N256. N423 carries N-linked (GlcNAc...) asparagine glycosylation. Intrachain disulfides connect C432/C498, C445/C511, and C479/C489. The lysyl-oxidase like stretch occupies residues 516–718 (PDLVLNAQLV…WTYSCHIGGS (203 aa)). Residues D517 and L518 each coordinate Ca(2+). Cystine bridges form between C541–C592, C547–C662, C624–C640, and C630–C652. Cu cation contacts are provided by H593, H595, and H597. The N-linked (GlcNAc...) asparagine glycan is linked to N611. The segment at residues 620-656 (KASFCLEDTHCDEGISKRYHCANFGEQGITVGCWDTY) is a cross-link (lysine tyrosylquinone (Lys-Tyr)). At Y656 the chain carries 2',4',5'-topaquinone. 4 residues coordinate Ca(2+): E689, D691, N694, and N695. C699 and C713 are joined by a disulfide.

The protein belongs to the lysyl oxidase family. Cu cation serves as cofactor. It depends on lysine tyrosylquinone residue as a cofactor. The lysine tyrosylquinone cross-link (LTQ) is generated by condensation of the epsilon-amino group of a lysine with a topaquinone produced by oxidation of tyrosine.

It is found in the secreted. The protein resides in the extracellular space. The protein localises to the extracellular matrix. Its subcellular location is the basement membrane. It localises to the nucleus. It is found in the chromosome. The protein resides in the endoplasmic reticulum. It carries out the reaction L-lysyl-[protein] + O2 + H2O = (S)-2-amino-6-oxohexanoyl-[protein] + H2O2 + NH4(+). Its function is as follows. Mediates the post-translational oxidative deamination of lysine residues on target proteins leading to the formation of deaminated lysine (allysine). Acts as a transcription corepressor and specifically mediates deamination of trimethylated 'Lys-4' of histone H3 (H3K4me3), a specific tag for epigenetic transcriptional activation. Shows no activity against histone H3 when it is trimethylated on 'Lys-9' (H3K9me3) or 'Lys-27' (H3K27me3) or when 'Lys-4' is monomethylated (H3K4me1) or dimethylated (H3K4me2). Also mediates deamination of methylated TAF10, a member of the transcription factor IID (TFIID) complex, which induces release of TAF10 from promoters, leading to inhibition of TFIID-dependent transcription. LOXL2-mediated deamination of TAF10 results in transcriptional repression of genes required for embryonic stem cell pluripotency. Involved in epithelial to mesenchymal transition (EMT) and participates in repression of E-cadherin, probably by mediating deamination of histone H3. When secreted into the extracellular matrix, promotes cross-linking of extracellular matrix proteins by mediating oxidative deamination of peptidyl lysine residues in precursors to fibrous collagen and elastin. Acts as a regulator of sprouting angiogenesis, probably via collagen IV scaffolding. Acts as a regulator of chondrocyte differentiation, probably by regulating expression of factors that control chondrocyte differentiation. Required with loxl2b for correct expression of Sox2 and for neural differentiation. In Danio rerio (Zebrafish), this protein is Lysyl oxidase homolog 2A (loxl2a).